The primary structure comprises 251 residues: uncharacterized protein (251 aa).

In terms of domain architecture, AMMECR1 spans 21–246 (KGSSPFAFYA…ITYEEFNKQL (226 aa)).

This is an uncharacterized protein from Saccharomyces cerevisiae (strain ATCC 204508 / S288c) (Baker's yeast).